The primary structure comprises 120 residues: NAD(P)H-quinone oxidoreductase subunit 3 (120 aa).

3 helical membrane-spanning segments follow: residues 10–30 (FLGFLIIAAAVPILALVTNLI), 64–84 (MFALVFVIFDVETVFLYPWAV), and 89–109 (LGLLAFIEALIFIAILVIALA).

It belongs to the complex I subunit 3 family. NDH-1 can be composed of about 15 different subunits; different subcomplexes with different compositions have been identified which probably have different functions.

The protein resides in the cellular thylakoid membrane. The enzyme catalyses a plastoquinone + NADH + (n+1) H(+)(in) = a plastoquinol + NAD(+) + n H(+)(out). It carries out the reaction a plastoquinone + NADPH + (n+1) H(+)(in) = a plastoquinol + NADP(+) + n H(+)(out). NDH-1 shuttles electrons from an unknown electron donor, via FMN and iron-sulfur (Fe-S) centers, to quinones in the respiratory and/or the photosynthetic chain. The immediate electron acceptor for the enzyme in this species is believed to be plastoquinone. Couples the redox reaction to proton translocation, and thus conserves the redox energy in a proton gradient. Cyanobacterial NDH-1 also plays a role in inorganic carbon-concentration. The protein is NAD(P)H-quinone oxidoreductase subunit 3 of Prochlorococcus marinus (strain MIT 9515).